The primary structure comprises 424 residues: Histidine--tRNA ligase (424 aa).

It belongs to the class-II aminoacyl-tRNA synthetase family. Homodimer.

The protein resides in the cytoplasm. The enzyme catalyses tRNA(His) + L-histidine + ATP = L-histidyl-tRNA(His) + AMP + diphosphate + H(+). The polypeptide is Histidine--tRNA ligase (Bacillus velezensis (strain DSM 23117 / BGSC 10A6 / LMG 26770 / FZB42) (Bacillus amyloliquefaciens subsp. plantarum)).